The following is a 274-amino-acid chain: NADPH-dependent 7-cyano-7-deazaguanine reductase (274 aa).

Substrate is bound at residue 80–82; the sequence is VES. Position 82 to 83 (82 to 83) interacts with NADPH; it reads SK. Catalysis depends on C181, which acts as the Thioimide intermediate. D188 functions as the Proton donor in the catalytic mechanism. 220 to 221 is a binding site for substrate; the sequence is HE. Residue 249-250 coordinates NADPH; it reads RG.

This sequence belongs to the GTP cyclohydrolase I family. QueF type 2 subfamily. Homodimer.

Its subcellular location is the cytoplasm. It carries out the reaction 7-aminomethyl-7-carbaguanine + 2 NADP(+) = 7-cyano-7-deazaguanine + 2 NADPH + 3 H(+). It participates in tRNA modification; tRNA-queuosine biosynthesis. Its function is as follows. Catalyzes the NADPH-dependent reduction of 7-cyano-7-deazaguanine (preQ0) to 7-aminomethyl-7-deazaguanine (preQ1). The protein is NADPH-dependent 7-cyano-7-deazaguanine reductase of Burkholderia mallei (strain NCTC 10247).